The primary structure comprises 403 residues: Acetate kinase (403 aa).

Asn-7 is a binding site for Mg(2+). An ATP-binding site is contributed by Lys-14. Residue Arg-90 participates in substrate binding. The active-site Proton donor/acceptor is Asp-147. ATP-binding positions include 207–211 (HIGNG), 283–285 (DMR), and 331–335 (GVGEN). Glu-386 lines the Mg(2+) pocket.

This sequence belongs to the acetokinase family. As to quaternary structure, homodimer. It depends on Mg(2+) as a cofactor. The cofactor is Mn(2+).

It is found in the cytoplasm. The enzyme catalyses acetate + ATP = acetyl phosphate + ADP. The protein operates within metabolic intermediate biosynthesis; acetyl-CoA biosynthesis; acetyl-CoA from acetate: step 1/2. Catalyzes the formation of acetyl phosphate from acetate and ATP. Can also catalyze the reverse reaction. Phosphorylates propionate (54%) in addition to acetate (100%). Uses GTP (100%), ITP (163%), UTP (56%), and CTP (21%) as phosphoryl donors in addition to ATP (100%). This chain is Acetate kinase, found in Thermotoga maritima (strain ATCC 43589 / DSM 3109 / JCM 10099 / NBRC 100826 / MSB8).